Reading from the N-terminus, the 271-residue chain is MQRIKLIIAYDGTNFCGWQLQPKLRTVQGDLEKAITRITGTTVRVHGSGRTDSGVHALGQVAHFDVDSCFASVKWQRALNSLLPDDVTILDAQLVSPEFHSRYSAIRKTYTYTLWLENSFFLPWRRHYVWKCGPLDFCALDQGMQYFLGEHDFSSFQNTGTEIKSTVRTIHEFKRYPGQTEQEMILEVCGSGFLKQMVRNMVGCLVRIGRGKAEPETVRSLLQMKDRTAAPATAPAQGLCMAGVYYGETGCGGTADTGRNQAQNCGINRED.

Catalysis depends on Asp52, which acts as the Nucleophile. Tyr110 contributes to the substrate binding site.

The protein belongs to the tRNA pseudouridine synthase TruA family. In terms of assembly, homodimer.

It catalyses the reaction uridine(38/39/40) in tRNA = pseudouridine(38/39/40) in tRNA. Its function is as follows. Formation of pseudouridine at positions 38, 39 and 40 in the anticodon stem and loop of transfer RNAs. The chain is tRNA pseudouridine synthase A from Maridesulfovibrio salexigens (strain ATCC 14822 / DSM 2638 / NCIMB 8403 / VKM B-1763) (Desulfovibrio salexigens).